Here is a 229-residue protein sequence, read N- to C-terminus: Ribonuclease T (229 aa).

The region spanning 23-197 (VIIDVETAGF…YDTERTAKLF (175 aa)) is the Exonuclease domain. 4 residues coordinate Mg(2+): D26, E28, H184, and D189. Catalysis depends on H184, which acts as the Proton donor/acceptor.

It belongs to the RNase T family. Homodimer. The cofactor is Mg(2+).

Functionally, trims short 3' overhangs of a variety of RNA species, leaving a one or two nucleotide 3' overhang. Responsible for the end-turnover of tRNA: specifically removes the terminal AMP residue from uncharged tRNA (tRNA-C-C-A). Also appears to be involved in tRNA biosynthesis. The protein is Ribonuclease T of Haemophilus influenzae (strain PittGG).